Reading from the N-terminus, the 164-residue chain is uncharacterized protein (164 aa).

The interval 46–142 (GRSPEQKEHV…APDNSIYDTL (97 aa)) is disordered.

This is an uncharacterized protein from Caenorhabditis elegans.